The chain runs to 255 residues: Type III pantothenate kinase (255 aa).

ATP is bound at residue 6–13 (DIGNTNIV). Substrate is bound at residue 107–110 (GSDC). Aspartate 109 serves as the catalytic Proton acceptor. K(+) is bound at residue aspartate 129. ATP is bound at residue threonine 132. Threonine 184 is a binding site for substrate.

It belongs to the type III pantothenate kinase family. In terms of assembly, homodimer. NH4(+) serves as cofactor. The cofactor is K(+).

The protein localises to the cytoplasm. It carries out the reaction (R)-pantothenate + ATP = (R)-4'-phosphopantothenate + ADP + H(+). It participates in cofactor biosynthesis; coenzyme A biosynthesis; CoA from (R)-pantothenate: step 1/5. Its function is as follows. Catalyzes the phosphorylation of pantothenate (Pan), the first step in CoA biosynthesis. This Bifidobacterium longum subsp. infantis (strain ATCC 15697 / DSM 20088 / JCM 1222 / NCTC 11817 / S12) protein is Type III pantothenate kinase.